The chain runs to 545 residues: Beta-sesquiphellandrene synthase (545 aa).

5 residues coordinate Mg(2+): Asp299, Asp303, Asn443, Ser447, and Glu451. Positions 299–303 (DDIMD) match the DDXXD motif motif.

It belongs to the terpene synthase family. It depends on Mg(2+) as a cofactor. The cofactor is Mn(2+).

It is found in the cytoplasm. The catalysed reaction is (2E,6E)-farnesyl diphosphate = beta-sesquiphellandrene + diphosphate. Its pathway is secondary metabolite biosynthesis; terpenoid biosynthesis. In terms of biological role, sesquiterpene synthase converting farnesyl diphosphate into beta-sesquiphellandrene and six minor products, zingiberene, 7-epi-sesquithujene, sesquisabinene A, (E)-alpha-bergamotene, (E)-beta-farnesene and beta-bisabolene. Can also accept geranyl diphosphate as substrate, producing nine monoterpenes, with myrcene and limonene as the major products. The polypeptide is Beta-sesquiphellandrene synthase (TPS2) (Sorghum bicolor (Sorghum)).